The primary structure comprises 489 residues: Probable serine protease EDA2 (489 aa).

A signal peptide spans 1-25 (MSLEFGFILINIFTAIVSFSTLSHA). N-linked (GlcNAc...) asparagine glycans are attached at residues Asn-35, Asn-51, and Asn-162. The active-site Charge relay system is the Ser-178. N-linked (GlcNAc...) asparagine glycans are attached at residues Asn-253, Asn-293, Asn-365, and Asn-406. Catalysis depends on Asp-410, which acts as the Charge relay system. Asn-419 carries an N-linked (GlcNAc...) asparagine glycan. His-436 serves as the catalytic Charge relay system. Asn-456 carries an N-linked (GlcNAc...) asparagine glycan.

This sequence belongs to the peptidase S28 family.

It is found in the secreted. In terms of biological role, may be involved in a proteolytic pathway controlling the nuclear division phase of megagametogenesis. In Arabidopsis thaliana (Mouse-ear cress), this protein is Probable serine protease EDA2 (EDA2).